The chain runs to 120 residues: MITKIDKNKVRMKRHARVRSKLAGTTERPRLNVYRSNKHIYAQVIDDVKGVTLAQASTQDKNLGLETTSNVEAAAKVGEAVAKLAVEKGVKAVVFDRGGYLFHGRVKALADAARENGLEF.

Belongs to the universal ribosomal protein uL18 family. Part of the 50S ribosomal subunit; part of the 5S rRNA/L5/L18/L25 subcomplex. Contacts the 5S and 23S rRNAs.

This is one of the proteins that bind and probably mediate the attachment of the 5S RNA into the large ribosomal subunit, where it forms part of the central protuberance. In Macrococcus caseolyticus (strain JCSC5402) (Macrococcoides caseolyticum), this protein is Large ribosomal subunit protein uL18.